A 194-amino-acid polypeptide reads, in one-letter code: Small ribosomal subunit protein uS4c (194 aa).

Residues 13–36 (GLTSKRPRSGSDPKNQLRSGKKSQ) form a disordered region. An S4 RNA-binding domain is found at 82–143 (MRLDNILFRL…KQRSKALIQN (62 aa)).

It belongs to the universal ribosomal protein uS4 family. As to quaternary structure, part of the 30S ribosomal subunit. Contacts protein S5. The interaction surface between S4 and S5 is involved in control of translational fidelity.

Its subcellular location is the plastid. It is found in the chloroplast. Functionally, one of the primary rRNA binding proteins, it binds directly to 16S rRNA where it nucleates assembly of the body of the 30S subunit. With S5 and S12 plays an important role in translational accuracy. The polypeptide is Small ribosomal subunit protein uS4c (rps4) (Moraea spathulata (Large yellow moraea)).